Reading from the N-terminus, the 430-residue chain is Adenylosuccinate synthetase (430 aa).

GTP is bound by residues 12–18 and 40–42; these read GDEGKGK and GHT. Aspartate 13 serves as the catalytic Proton acceptor. The Mg(2+) site is built by aspartate 13 and glycine 40. IMP contacts are provided by residues 13 to 16, 38 to 41, threonine 128, arginine 142, glutamine 223, threonine 238, and arginine 302; these read DEGK and NAGH. Histidine 41 functions as the Proton donor in the catalytic mechanism. Residue 298-304 participates in substrate binding; it reads TTTGRPR. GTP contacts are provided by residues arginine 304, 330 to 332, and 412 to 414; these read LLD and SVG.

This sequence belongs to the adenylosuccinate synthetase family. In terms of assembly, homodimer. It depends on Mg(2+) as a cofactor.

It is found in the cytoplasm. The enzyme catalyses IMP + L-aspartate + GTP = N(6)-(1,2-dicarboxyethyl)-AMP + GDP + phosphate + 2 H(+). Its pathway is purine metabolism; AMP biosynthesis via de novo pathway; AMP from IMP: step 1/2. Plays an important role in the de novo pathway of purine nucleotide biosynthesis. Catalyzes the first committed step in the biosynthesis of AMP from IMP. The chain is Adenylosuccinate synthetase from Listeria monocytogenes serotype 4b (strain CLIP80459).